The sequence spans 409 residues: Histidine--tRNA ligase (409 aa).

This sequence belongs to the class-II aminoacyl-tRNA synthetase family.

The protein resides in the cytoplasm. It catalyses the reaction tRNA(His) + L-histidine + ATP = L-histidyl-tRNA(His) + AMP + diphosphate + H(+). The protein is Histidine--tRNA ligase of Methanosphaerula palustris (strain ATCC BAA-1556 / DSM 19958 / E1-9c).